We begin with the raw amino-acid sequence, 141 residues long: Putative pre-16S rRNA nuclease (141 aa).

The protein belongs to the YqgF nuclease family.

It localises to the cytoplasm. In terms of biological role, could be a nuclease involved in processing of the 5'-end of pre-16S rRNA. The polypeptide is Putative pre-16S rRNA nuclease (Clostridioides difficile (strain 630) (Peptoclostridium difficile)).